Here is a 125-residue protein sequence, read N- to C-terminus: Acidic phospholipase A2 6 (125 aa).

Serine 1 is a signal peptide. Residues 2 to 7 (NRPMPL) constitute a propeptide that is removed on maturation. Intrachain disulfides connect cysteine 18–cysteine 77, cysteine 33–cysteine 124, cysteine 35–cysteine 50, cysteine 49–cysteine 105, cysteine 56–cysteine 98, cysteine 66–cysteine 91, and cysteine 84–cysteine 96. A Zn(2+)-binding site is contributed by aspartate 30. 2 residues coordinate Ca(2+): tyrosine 34 and glycine 36. The active site involves histidine 53. Ca(2+) is bound at residue aspartate 54. The active site involves aspartate 99.

In terms of assembly, heterodimer formed between isoform 5 and isoform 6 in presence of zinc ion and monomer in absence of zinc ion. The cofactor is Ca(2+). In terms of tissue distribution, expressed by the venom gland.

It is found in the secreted. It carries out the reaction a 1,2-diacyl-sn-glycero-3-phosphocholine + H2O = a 1-acyl-sn-glycero-3-phosphocholine + a fatty acid + H(+). Functionally, PLA2 catalyzes the calcium-dependent hydrolysis of the 2-acyl groups in 3-sn-phosphoglycerides. The sequence is that of Acidic phospholipase A2 6 from Naja sagittifera (Andaman cobra).